We begin with the raw amino-acid sequence, 172 residues long: DNA-directed RNA polymerase II subunit RPB7 (172 aa).

This sequence belongs to the eukaryotic RPB7/RPC8 RNA polymerase subunit family. In terms of assembly, component of the RNA polymerase II (Pol II) core complex consisting of 12 subunits: a ten-subunit catalytic core composed of POLR2A/RPB1, POLR2B/RPB2, POLR2C/RPB3, POLR2I/RPB9, POLR2J/RPB11, POLR2E/RPABC1, POLR2F/RPABC2, POLR2H/RPABC3, POLR2K/RPABC4 and POLR2L/RPABC5 and a mobile stalk composed of two subunits POLR2D/RPB4 and POLR2G/RPB7, protruding from the core and functioning primarily in transcription initiation. Part of Pol II(G) complex, in which Pol II core associates with an additional subunit POLR2M; unlike conventional Pol II, Pol II(G) functions as a transcriptional repressor. Part of TBP-based Pol II pre-initiation complex (PIC), in which Pol II core assembles with general transcription factors and other specific initiation factors including GTF2E1, GTF2E2, GTF2F1, GTF2F2, TCEA1, ERCC2, ERCC3, GTF2H2, GTF2H3, GTF2H4, GTF2H5, GTF2A1, GTF2A2, GTF2B and TBP; this large multi-subunit PIC complex mediates DNA unwinding and targets Pol II core to the transcription start site where the first phosphodiester bond forms.

The protein localises to the nucleus. Functionally, core component of RNA polymerase II (Pol II), a DNA-dependent RNA polymerase which synthesizes mRNA precursors and many functional non-coding RNAs using the four ribonucleoside triphosphates as substrates. Pol II is the central component of the basal RNA polymerase II transcription machinery. It is composed of mobile elements that move relative to each other. POLR2G/RPB7 is part of a subcomplex with POLR2D/RPB4 that binds to a pocket formed by POLR2A/RPB1, POLR2B/RPB2 and POLR2F/RPABC2 at the base of the clamp element. The POLR2D/RPB4-POLR2G/RPB7 subcomplex seems to lock the clamp via POLR2G/RPB7 in the closed conformation thus preventing double-stranded DNA to enter the active site cleft. The POLR2D/RPB4-POLR2G/RPB7 subcomplex binds single-stranded DNA and RNA. The sequence is that of DNA-directed RNA polymerase II subunit RPB7 (POLR2G) from Bos taurus (Bovine).